We begin with the raw amino-acid sequence, 516 residues long: Flagellar radial spoke protein 3 (516 aa).

Polar residues-rich tracts occupy residues 1–11 and 62–74; these read MVQAKAQQQLY and ATQT…SPAS. Disordered stretches follow at residues 1-32, 60-90, 388-412, and 424-447; these read MVQA…EDET, ADAT…TPEA, NAKW…AAEE, and AAAE…DGVE. The span at 391–412 shows a compositional bias: basic and acidic residues; sequence WEADKAEAAEKARAEAEAAAEE.

The protein belongs to the flagellar radial spoke RSP3 family. In terms of assembly, interacts with FAP91. In terms of processing, protein 3 is one of the 5 radial spoke proteins that are phosphorylated. Protein 3a might only differ from protein 3 in being unphosphorylated.

It is found in the cytoplasm. The protein resides in the cytoskeleton. The protein localises to the flagellum axoneme. Its function is as follows. Protein 3 may attach the radial spoke to the outer doublet microtubule or is required to form a stable spoke structure. Functionally, flagellar radial spokes contribute to the regulation of dynein arm activity and thus the pattern of flagellar bending. They consist of a thin stalk, which is attached to the a subfiber of the outer doublet microtubule, and a bulbous head, which is attached to the stalk and appears to interact with the projections from the central pair of microtubules. This is Flagellar radial spoke protein 3 from Chlamydomonas reinhardtii (Chlamydomonas smithii).